The following is a 161-amino-acid chain: RNA pyrophosphohydrolase (161 aa).

The Nudix hydrolase domain occupies 12–154 (PYRPGVGMMI…KRKLYQAVVK (143 aa)). The Nudix box signature appears at 46-67 (GGIVPGETPSIAAMREMLEEIG).

This sequence belongs to the Nudix hydrolase family. RppH subfamily. It depends on a divalent metal cation as a cofactor.

In terms of biological role, accelerates the degradation of transcripts by removing pyrophosphate from the 5'-end of triphosphorylated RNA, leading to a more labile monophosphorylated state that can stimulate subsequent ribonuclease cleavage. The chain is RNA pyrophosphohydrolase from Rickettsia typhi (strain ATCC VR-144 / Wilmington).